We begin with the raw amino-acid sequence, 90 residues long: Protein RL8A (90 aa).

A helical membrane pass occupies residues 15–34 (WTCEGLLLLLGLLVLFFHHH). A disordered region spans residues 55–90 (HESGWYSSDDDGDRDGDEETGESHNRNSVGLSAVFS). The segment covering 62-74 (SDDDGDRDGDEET) has biased composition (acidic residues). Polar residues predominate over residues 80 to 90 (RNSVGLSAVFS).

Its subcellular location is the host membrane. In Homo sapiens (Human), this protein is Protein RL8A (RL8A).